We begin with the raw amino-acid sequence, 512 residues long: Maturase K (512 aa).

It belongs to the intron maturase 2 family. MatK subfamily.

Its subcellular location is the plastid. It localises to the chloroplast. Usually encoded in the trnK tRNA gene intron. Probably assists in splicing its own and other chloroplast group II introns. This chain is Maturase K, found in Dalea wrightii (Wright's prairie clover).